A 124-amino-acid polypeptide reads, in one-letter code: Kalata-B1 (124 aa).

The signal sequence occupies residues 1-22 (MAKFTVCLLLCLLLAAFVGAFG). A propeptide spanning residues 23 to 88 (SELSDSHKTT…QVFLKQLQLK (66 aa)) is cleaved from the precursor. The segment at residues 89–117 (GLPVCGETCVGGTCNTPGCTCSWPVCTRN) is a cross-link (cyclopeptide (Gly-Asn)). Disulfide bonds link cysteine 93-cysteine 107, cysteine 97-cysteine 109, and cysteine 102-cysteine 114. Positions 118-124 (GLPSLAA) are excised as a propeptide.

It belongs to the cyclotide family. Moebius subfamily. Kalata-B1 is a cyclic peptide which occurs in three forms: with unmodified Trp-111, with Trp-111 oxidized to form oxindolylalanine and with Trp-111 oxidized to form N-formylkynurenine. Oxidation is enhanced by exposure to sunlight. As to expression, leaves and stems. Lower in roots.

Probably participates in a plant defense mechanism. Has antibiotic activity. Has a diuretic effect. Has a uterotonic effect in humans. Active against the Gram-positive S.aureus with a minimum inhibition concentration of approximately 0.2 microM. Relatively ineffective against Gram-negative bacteria such as E.coli and P.aeruginosa. Inhibitory effect on the growth and development of larvae from H.punctigera. The unmodified form has hemolytic activity, the oxidized form lacks hemolytic activity. If the protein is linearized, hemolytic activity is lost. This Oldenlandia affinis protein is Kalata-B1 (OAK1).